The following is a 91-amino-acid chain: uncharacterized protein (91 aa).

The first 20 residues, 1 to 20 (MFSRVLALLAVLLLSANTWA), serve as a signal peptide directing secretion.

This sequence belongs to the BhsA/McbA family.

The protein resides in the periplasm. This is an uncharacterized protein from Escherichia coli O157:H7.